Reading from the N-terminus, the 527-residue chain is Probable bifunctional tRNA threonylcarbamoyladenosine biosynthesis protein (527 aa).

The interval 1 to 324 (MIVLGLEGTA…YRIDEVDAPW (324 aa)) is kae1. Fe cation-binding residues include histidine 107, histidine 111, and tyrosine 128. L-threonylcarbamoyladenylate is bound by residues 128-132 (YVSGG), aspartate 160, glycine 173, glutamate 177, and asparagine 257. Residue aspartate 285 coordinates Fe cation. The Protein kinase domain occupies 330–527 (VKYRDAGAES…EDIRRRHRYV (198 aa)). Residues 333–341 (RDAGAESRI) and lysine 354 contribute to the ATP site. Residue aspartate 445 is the Proton acceptor; for kinase activity of the active site.

This sequence in the N-terminal section; belongs to the KAE1 / TsaD family. It in the C-terminal section; belongs to the protein kinase superfamily. Tyr protein kinase family. BUD32 subfamily. As to quaternary structure, component of the KEOPS complex that consists of Kae1, Bud32, Cgi121 and Pcc1; the whole complex dimerizes. Requires Fe(2+) as cofactor.

The protein localises to the cytoplasm. The catalysed reaction is L-seryl-[protein] + ATP = O-phospho-L-seryl-[protein] + ADP + H(+). It carries out the reaction L-threonyl-[protein] + ATP = O-phospho-L-threonyl-[protein] + ADP + H(+). The enzyme catalyses L-threonylcarbamoyladenylate + adenosine(37) in tRNA = N(6)-L-threonylcarbamoyladenosine(37) in tRNA + AMP + H(+). Required for the formation of a threonylcarbamoyl group on adenosine at position 37 (t(6)A37) in tRNAs that read codons beginning with adenine. Is a component of the KEOPS complex that is probably involved in the transfer of the threonylcarbamoyl moiety of threonylcarbamoyl-AMP (TC-AMP) to the N6 group of A37. The Kae1 domain likely plays a direct catalytic role in this reaction. The Bud32 domain probably displays kinase activity that regulates Kae1 function. The polypeptide is Probable bifunctional tRNA threonylcarbamoyladenosine biosynthesis protein (Thermoplasma volcanium (strain ATCC 51530 / DSM 4299 / JCM 9571 / NBRC 15438 / GSS1)).